We begin with the raw amino-acid sequence, 244 residues long: 1-(5-phosphoribosyl)-5-[(5-phosphoribosylamino)methylideneamino] imidazole-4-carboxamide isomerase (244 aa).

Asp10 functions as the Proton acceptor in the catalytic mechanism. The active-site Proton donor is Asp132.

It belongs to the HisA/HisF family.

Its subcellular location is the cytoplasm. It catalyses the reaction 1-(5-phospho-beta-D-ribosyl)-5-[(5-phospho-beta-D-ribosylamino)methylideneamino]imidazole-4-carboxamide = 5-[(5-phospho-1-deoxy-D-ribulos-1-ylimino)methylamino]-1-(5-phospho-beta-D-ribosyl)imidazole-4-carboxamide. Its pathway is amino-acid biosynthesis; L-histidine biosynthesis; L-histidine from 5-phospho-alpha-D-ribose 1-diphosphate: step 4/9. The sequence is that of 1-(5-phosphoribosyl)-5-[(5-phosphoribosylamino)methylideneamino] imidazole-4-carboxamide isomerase from Xanthomonas axonopodis pv. citri (strain 306).